Reading from the N-terminus, the 307-residue chain is uncharacterized protein (307 aa).

Positions 254–278 (HSRHHRRHHRRHHHHHHQNSSHSDE) are disordered. A compositionally biased stretch (basic residues) spans 255-272 (SRHHRRHHRRHHHHHHQN).

To yeast YOR062c.

This is an uncharacterized protein from Saccharomyces cerevisiae (strain ATCC 204508 / S288c) (Baker's yeast).